We begin with the raw amino-acid sequence, 244 residues long: Dehydration-responsive element-binding protein 2E (244 aa).

The disordered stretch occupies residues Met-1–Val-25. A Nuclear localization signal motif is present at residues Arg-20–Arg-46. A DNA-binding region (AP2/ERF) is located at residues Arg-69–Pro-134.

This sequence belongs to the AP2/ERF transcription factor family. ERF subfamily. As to expression, expressed in xylem tissues, stigma, anthers and region where sepals and petals attach the peduncle.

The protein localises to the nucleus. Its function is as follows. Transcriptional activator that binds specifically to the DNA sequence 5'-[AG]CCGAC-3'. Binding to the C-repeat/DRE element mediates abscisic acid-inducible transcription. Involved in the regulation of plant development and tolerance to abiotic stresses. In Arabidopsis thaliana (Mouse-ear cress), this protein is Dehydration-responsive element-binding protein 2E (DREB2E).